The primary structure comprises 508 residues: Lysine--tRNA ligase (508 aa).

Mg(2+) contacts are provided by Glu-418 and Glu-425.

This sequence belongs to the class-II aminoacyl-tRNA synthetase family. As to quaternary structure, homodimer. Mg(2+) is required as a cofactor.

The protein localises to the cytoplasm. The catalysed reaction is tRNA(Lys) + L-lysine + ATP = L-lysyl-tRNA(Lys) + AMP + diphosphate. This Burkholderia ambifaria (strain MC40-6) protein is Lysine--tRNA ligase.